A 341-amino-acid polypeptide reads, in one-letter code: Protein P3 (341 aa).

The disordered stretch occupies residues 46–175; sequence RARQAANPVS…QTKNAPDANE (130 aa). Basic residues predominate over residues 97-116; sequence KSKRAVRREKRRTAAKKATN. Residues 142–152 are compositionally biased toward low complexity; sequence SYLSSLLSSPS.

It belongs to the nepovirus protein P3 family.

The chain is Protein P3 from Vitis rupestris (Grape).